Reading from the N-terminus, the 955-residue chain is Eukaryotic translation initiation factor 3 subunit C (955 aa).

Disordered regions lie at residues Met1–Val22 and Arg157–Trp299. Positions Asp162–Glu183 are enriched in acidic residues. Residues Val206–Gly218 are compositionally biased toward low complexity. Over residues Ser219–Asp229 the composition is skewed to acidic residues. A compositionally biased stretch (basic and acidic residues) spans Glu230–Glu250. Acidic residues predominate over residues Met288–Glu297. In terms of domain architecture, PCI spans Phe658–Pro834. Residues Asn865–Glu955 are disordered. Residues Tyr882–Asn894 are compositionally biased toward low complexity. Over residues Gly911–Glu955 the composition is skewed to basic and acidic residues.

This sequence belongs to the eIF-3 subunit C family. Component of the eukaryotic translation initiation factor 3 (eIF-3) complex.

The protein localises to the cytoplasm. Its function is as follows. Component of the eukaryotic translation initiation factor 3 (eIF-3) complex, which is involved in protein synthesis of a specialized repertoire of mRNAs and, together with other initiation factors, stimulates binding of mRNA and methionyl-tRNAi to the 40S ribosome. The eIF-3 complex specifically targets and initiates translation of a subset of mRNAs involved in cell proliferation. In Anopheles gambiae (African malaria mosquito), this protein is Eukaryotic translation initiation factor 3 subunit C.